A 579-amino-acid polypeptide reads, in one-letter code: Folliculin (579 aa).

The interval 32–82 is disordered; the sequence is GAGSGDSPGQVEQAEEEEGGIQMSSRVRAHSPAEGASTDSSSPGPKKSDMC. Serine 62 and serine 73 each carry phosphoserine. Residues 86 to 242 form the uDENN FLCN/SMCR8-type domain; sequence RSLAVGHPGY…RNGNAARSLT (157 aa). The stretch at 287 to 310 forms a coiled coil; it reads EKLADLEEESESWDNSEAEEEEKA. The segment covering 294–308 has biased composition (acidic residues); that stretch reads EESESWDNSEAEEEE. The tract at residues 294–320 is disordered; that stretch reads EESESWDNSEAEEEEKAPATAEGAEGR. Phosphoserine is present on residues serine 302, serine 406, serine 537, serine 542, and serine 571. Residues 339–491 enclose the cDENN FLCN/SMCR8-type domain; sequence QPPKLSVFKS…ILNKMEAALT (153 aa). The region spanning 493–558 is the dDENN FLCN/SMCR8-type domain; it reads QNLSVDVVDQ…LLKFWMTGLS (66 aa).

Belongs to the folliculin family. As to quaternary structure, interacts (via C-terminus) with FNIP1 or FNIP2 (via C-terminus). Component of the lysosomal folliculin complex (LFC), composed of FLCN, FNIP1 (or FNIP2), RagA/RRAGA or RagB/RRAGB GDP-bound, RagC/RRAGC or RagD/RRAGD GTP-bound, and Ragulator. Interaction with FNIP1 or FNIP2 mediates indirect interaction with the PRKAA1, PRKAB1 and PRKAG1 subunits of 5'-AMP-activated protein kinase (AMPK). Interacts with HSP90AA1 in the presence of FNIP1. Interacts with HSP70, STUB1, CDC37, AHSA1, CCT2, STIP1, PTGES3 and PPP5C. Interacts with GABARAP; interaction takes place in the presence of FNIP1 and/or FNIP2. Interacts with RILP; the interaction is direct and promotes association between RILP and RAB34. Interacts with KIF3A and KIF3B. Interacts with lactate dehydrogenase LDHA, but not LDHB; the interaction is direct, may preferentially bind LDHA dimers rather than tetramers, and regulates LDHA activity, acting as an uncompetitive inhibitor. In terms of processing, phosphorylation by ULK1 modulates the interaction with GABARAP and is required to regulate autophagy. In terms of tissue distribution, expressed in kidney.

It localises to the lysosome membrane. The protein localises to the cytoplasm. It is found in the cytosol. Its subcellular location is the cell projection. The protein resides in the cilium. It localises to the cytoskeleton. The protein localises to the microtubule organizing center. It is found in the centrosome. Its subcellular location is the spindle. The protein resides in the nucleus. With respect to regulation, GTPase-activating activity is inhibited in the folliculin complex (LFC), which stabilizes the GDP-bound state of RagA/RRAGA (or RagB/RRAGB), because Arg-164 is located far from the RagC/RRAGC or RagD/RRAGD nucleotide pocket. Disassembly of the LFC complex upon amino acid restimulation liberates the GTPase-activating activity. In terms of biological role, multi-functional protein, involved in both the cellular response to amino acid availability and in the regulation of glycolysis. GTPase-activating protein that plays a key role in the cellular response to amino acid availability through regulation of the non-canonical mTORC1 signaling cascade controlling the MiT/TFE factors TFEB and TFE3. Activates mTORC1 by acting as a GTPase-activating protein: specifically stimulates GTP hydrolysis by RagC/RRAGC or RagD/RRAGD, promoting the conversion to the GDP-bound state of RagC/RRAGC or RagD/RRAGD, and thereby activating the kinase activity of mTORC1. The GTPase-activating activity is inhibited during starvation and activated in presence of nutrients. Acts as a key component for non-canonical mTORC1-dependent control of the MiT/TFE factors TFEB and TFE3, while it is not involved in mTORC1-dependent phosphorylation of canonical RPS6KB1/S6K1 and EIF4EBP1/4E-BP1. In low-amino acid conditions, the lysosomal folliculin complex (LFC) is formed on the membrane of lysosomes, which inhibits the GTPase-activating activity of FLCN, inactivates mTORC1 and maximizes nuclear translocation of TFEB and TFE3. Upon amino acid restimulation, RagA/RRAGA (or RagB/RRAGB) nucleotide exchange promotes disassembly of the LFC complex and liberates the GTPase-activating activity of FLCN, leading to activation of mTORC1 and subsequent cytoplasmic retention of TFEB and TFE3. Indirectly acts as a positive regulator of Wnt signaling by promoting mTOR-dependent cytoplasmic retention of MiT/TFE factor TFE3. Required for the exit of hematopoietic stem cell from pluripotency by promoting mTOR-dependent cytoplasmic retention of TFE3, thereby increasing Wnt signaling. Involved in the control of embryonic stem cells differentiation; together with LAMTOR1 it is necessary to recruit and activate RagC/RRAGC and RagD/RRAGD at the lysosomes, and to induce exit of embryonic stem cells from pluripotency via non-canonical, mTOR-independent TFE3 inactivation. Acts as an inhibitor of browning of adipose tissue by regulating mTOR-dependent cytoplasmic retention of TFE3. In response to flow stress, regulates STK11/LKB1 accumulation and mTORC1 activation through primary cilia: may act by recruiting STK11/LKB1 to primary cilia for activation of AMPK resided at basal bodies, causing mTORC1 down-regulation. Together with FNIP1 and/or FNIP2, regulates autophagy: following phosphorylation by ULK1, interacts with GABARAP and promotes autophagy. Required for starvation-induced perinuclear clustering of lysosomes by promoting association of RILP with its effector RAB34. Regulates glycolysis by binding to lactate dehydrogenase LDHA, acting as an uncompetitive inhibitor. The protein is Folliculin of Rattus norvegicus (Rat).